We begin with the raw amino-acid sequence, 71 residues long: Small ribosomal subunit protein bS21 (71 aa).

It belongs to the bacterial ribosomal protein bS21 family.

This Ruthia magnifica subsp. Calyptogena magnifica protein is Small ribosomal subunit protein bS21.